Consider the following 304-residue polypeptide: MTKKILILSGGISKERLISLDTGKQVAKELIKNGYKVLISEPDKNLSKNITSFKPDVIFNALHGQFGEDGYIQAILETKKIPYTHSGVIASSIAMDKEISKKIFIKNKILTPKYIKFNHKKNKLNIIKLIEKNLKFPVVVKPINEGSSVHVYICDKTNILKNLKVLKSYNEILIEEFIPGREIQVAIMNNKSLGAIELEPRRKFYDYEAKYNSSAKTKHLIPVDLSKNNLAKITGIARAAHKIIGCKGVTRSDFKFFNGKFYLLEINTQPGMTKLSLVPEIAKHKGISFIKLIEWILKDASINR.

Residues Lys101–Lys298 form the ATP-grasp domain. An ATP-binding site is contributed by Glu131–Gln184. 3 residues coordinate Mg(2+): Asp253, Glu265, and Asn267.

Belongs to the D-alanine--D-alanine ligase family. Mg(2+) is required as a cofactor. It depends on Mn(2+) as a cofactor.

It localises to the cytoplasm. It catalyses the reaction 2 D-alanine + ATP = D-alanyl-D-alanine + ADP + phosphate + H(+). Its pathway is cell wall biogenesis; peptidoglycan biosynthesis. Cell wall formation. This is D-alanine--D-alanine ligase from Pelagibacter ubique (strain HTCC1062).